The chain runs to 569 residues: Laccase-14 (569 aa).

Positions 1–33 are cleaved as a signal peptide; that stretch reads MEFKLNIPNTIIKTLQTIVFFLFVLLAFQIAEA. Plastocyanin-like domains lie at 41–157 and 167–320; these read KIKS…PKRG and REIP…YKGD. The N-linked (GlcNAc...) asparagine glycan is linked to Asn-87. Residues His-91, His-93, His-136, and His-138 each coordinate Cu cation. Residues Asn-190, Asn-249, Asn-336, Asn-374, Asn-395, Asn-430, and Asn-452 are each glycosylated (N-linked (GlcNAc...) asparagine). The region spanning 420-553 is the Plastocyanin-like 3 domain; sequence DFPRNPPTKF…NTVFIVKDGP (134 aa). Cu cation-binding residues include His-470, His-473, His-475, His-532, Cys-533, His-534, His-538, and Met-543.

The protein belongs to the multicopper oxidase family. The cofactor is Cu cation. In terms of tissue distribution, expressed at low levels in flowers and siliques.

The protein resides in the secreted. It localises to the extracellular space. It is found in the apoplast. The enzyme catalyses 4 hydroquinone + O2 = 4 benzosemiquinone + 2 H2O. Functionally, lignin degradation and detoxification of lignin-derived products. This Arabidopsis thaliana (Mouse-ear cress) protein is Laccase-14 (LAC14).